The chain runs to 806 residues: G-type lectin S-receptor-like serine/threonine-protein kinase At1g61430 (806 aa).

The N-terminal stretch at 1–24 (MGKKRIVFFAYLPFFTIFMSFSFA) is a signal peptide. In terms of domain architecture, Bulb-type lectin spans 25–144 (GITKESPFSI…VSGRTLWQSF (120 aa)). Residues 25 to 425 (GITKESPFSI…ELDVNKRKMT (401 aa)) are Extracellular-facing. N-linked (GlcNAc...) asparagine glycosylation is found at Asn53, Asn94, Asn117, and Asn236. One can recognise an EGF-like domain in the interval 277 to 313 (PANSCDIYGVCGPFGLCVVSIPPKCKCFKGFVPKFAK). 2 cysteine pairs are disulfide-bonded: Cys281–Cys293 and Cys287–Cys301. Asn319, Asn335, and Asn374 each carry an N-linked (GlcNAc...) asparagine glycan. The PAN domain maps to 332 to 414 (CQGNSSGKDA…GELLSIRLAR (83 aa)). Disulfide bonds link Cys367–Cys388 and Cys371–Cys377. Residues 426 to 446 (IVASTVSLTLFVIFGFAAFGF) form a helical membrane-spanning segment. Topologically, residues 447 to 806 (WRCRVEHNAH…EMTESVIQGR (360 aa)) are cytoplasmic. The 289-residue stretch at 489–777 (FSLSNKLGPG…DLPLPKKPTF (289 aa)) folds into the Protein kinase domain. ATP contacts are provided by residues 495–503 (LGPGGFGSV) and Lys520. Phosphoserine occurs at positions 526 and 541. The segment at 581 to 598 (RKKLELDWPKRFEIIEGI) is caM-binding. Asp617 (proton acceptor) is an active-site residue. A phosphoserine mark is found at Ser621 and Ser634. Thr651 carries the post-translational modification Phosphothreonine. Phosphoserine occurs at positions 694, 695, and 788.

The protein belongs to the protein kinase superfamily. Ser/Thr protein kinase family.

It is found in the cell membrane. The enzyme catalyses L-seryl-[protein] + ATP = O-phospho-L-seryl-[protein] + ADP + H(+). It carries out the reaction L-threonyl-[protein] + ATP = O-phospho-L-threonyl-[protein] + ADP + H(+). The chain is G-type lectin S-receptor-like serine/threonine-protein kinase At1g61430 from Arabidopsis thaliana (Mouse-ear cress).